Reading from the N-terminus, the 363-residue chain is Protein EXORDIUM-like 5 (363 aa).

The N-terminal stretch at 1–25 (MSSPATTITFFFFFTLSSFFYITSS) is a signal peptide. Asparagine 144 is a glycosylation site (N-linked (GlcNAc...) asparagine).

It belongs to the EXORDIUM family.

Its subcellular location is the secreted. The protein localises to the extracellular space. It localises to the apoplast. Its function is as follows. May play a role in a brassinosteroid-dependent regulation of growth and development. In Arabidopsis thaliana (Mouse-ear cress), this protein is Protein EXORDIUM-like 5 (EXL5).